The primary structure comprises 476 residues: Eukaryotic translation initiation factor 3 subunit L (476 aa).

The PCI domain maps to aspartate 257–leucine 452.

Belongs to the eIF-3 subunit L family. Component of the eukaryotic translation initiation factor 3 (eIF-3) complex.

Its subcellular location is the cytoplasm. In terms of biological role, component of the eukaryotic translation initiation factor 3 (eIF-3) complex, which is involved in protein synthesis of a specialized repertoire of mRNAs and, together with other initiation factors, stimulates binding of mRNA and methionyl-tRNAi to the 40S ribosome. The eIF-3 complex specifically targets and initiates translation of a subset of mRNAs involved in cell proliferation. The protein is Eukaryotic translation initiation factor 3 subunit L of Aspergillus oryzae (strain ATCC 42149 / RIB 40) (Yellow koji mold).